Reading from the N-terminus, the 448-residue chain is uncharacterized protein (448 aa).

Topologically, residues 1–50 (MAPEIFVKFKCASRDIKLLWASVFLRLLSYGLTNQVLTLFLNAINMTEDK) are extracellular. Residues 51–71 (IGLFMSLTLAGDVICSYILTW) form a helical membrane-spanning segment. The Cytoplasmic segment spans residues 72–93 (YADSWGRRRVLVYGCAMMLLSG). Residues 94-114 (LVFSFSENFTLLLVFAIFGVI) traverse the membrane as a helical segment. At 115-146 (SPSSDEVGPFKSIEEAMIAHLSPHNARPEIYA) the chain is on the extracellular side. A helical membrane pass occupies residues 147–167 (IHALVGTIGSALGAIICGIFV). Residues 168–184 (DLLKRTGLAATDLQCYK) are Cytoplasmic-facing. Residues 185 to 205 (LVFLLYAFFAFCKMVIMLLLS) form a helical membrane-spanning segment. Residues 206 to 260 (DATELDGHYEHTDCNEETAEPLDVNDETAPLMRQATHPEERSNKLSKETVSVLMK) are Extracellular-facing. The helical transmembrane segment at 261 to 281 (LLVIFMVDSLGSGFMTSGWMV) threads the bilayer. The Cytoplasmic segment spans residues 282-287 (YYYSKQ). The helical transmembrane segment at 288–308 (FLMGSLALGTLFFITQLVMAS) threads the bilayer. Topologically, residues 309-333 (STIPSSIIARCFGPVRATLLVQIPS) are extracellular. A helical transmembrane segment spans residues 334–354 (GIFSILIPMAKNYLPLSILFL). Topologically, residues 355–386 (NLHFATTAMDVTPRQILLTNIIKPRDLTKVMG) are cytoplasmic. 386–393 (GVVNIGKT) serves as a coordination point for ATP. The helical transmembrane segment at 387 to 407 (VVNIGKTFARCVGPIFTGILA) threads the bilayer. Residues 408-416 (NNNYLWLCY) lie on the Extracellular side of the membrane. A helical transmembrane segment spans residues 417–437 (IISGSLVITADLILACMFLGV). Over 438–448 (DAKIKKQMNRH) the chain is Cytoplasmic.

It localises to the membrane. This is an uncharacterized protein from Saccharomyces cerevisiae (strain ATCC 204508 / S288c) (Baker's yeast).